A 430-amino-acid chain; its full sequence is KIN17-like protein (430 aa).

A C2H2-type zinc finger spans residues 28 to 50 (CQMCQKQCRDENGFKCHCMSESH). The tract at residues 51–160 (QRQMQVFGQA…KARLKRKRIK (110 aa)) is winged helix-turn-helix (wHTH). A coiled-coil region spans residues 147–183 (EQAVKARLKRKRIKSDLAEDERQERMIARQIERAQQS). Positions 155 to 158 (KRKR) match the Nuclear localization signal (NLS) motif. 2 disordered regions span residues 179–230 (RAQQ…ANKA) and 261–284 (EEEDEVSARDKEKEELAKKKGKDA). The span at 191 to 224 (LGDDASPDGSEGESGSEDEYSDSENDHEGQEEDA) shows a compositional bias: acidic residues. Over residues 261–278 (EEEDEVSARDKEKEELAK) the composition is skewed to basic and acidic residues. The stretch at 283-312 (DAINAAEARRSALDELMKEEEKAKERSNRK) forms a coiled coil. Positions 319–370 (GIVVKVMSKSLAEKGYCKQKGVVKRVIDKYVGEIEMLESKHVLRVDQDELET) are C-terminal subdomain A. The interval 376-427 (GGLVRIVNGAYRGSNARLLSVDTERFCAKVQVEKGLYDGKVLKAIEYEDICK) is C-terminal subdomain B.

Belongs to the KIN17 family.

The protein resides in the nucleus. The protein is KIN17-like protein of Oryza sativa subsp. japonica (Rice).